Reading from the N-terminus, the 245-residue chain is MGRLDGKVIVLTAAAQGIGRAAALAFAKEGAKVIATDINDSKLQELDKYPGIHTRVLDVTKKKQIDQFANDIERLDVLFNVAGFVHHGTILDCEETDWDFSMNLNVRSMYLMIKAFLPKMMAQKSGNIINMSSVASSIKGVVNRCVYSTTKAAVIGLTKSVAADFIQQGIRCNCVCPGTVDTPSLQERIQARPNPEEALSDFLKRQKTGRFATAEEVALLCVYLASDESAYITGNPVIIDGGWSL.

NAD(+)-binding positions include glutamine 16–isoleucine 18, aspartate 37, and aspartate 58. Position 144 (arginine 144) interacts with substrate. Residue tyrosine 147 is the Proton acceptor of the active site. Residues lysine 151 and valine 180–serine 184 each bind NAD(+). Residues arginine 188 and arginine 205 each contribute to the substrate site.

The protein belongs to the short-chain dehydrogenases/reductases (SDR) family. In terms of assembly, homotetramer.

It is found in the cytoplasm. It carries out the reaction cis-4-hydroxy-L-proline + NAD(+) = 4-oxo-L-proline + NADH + H(+). It catalyses the reaction (R)-3-hydroxybutanoate + NAD(+) = acetoacetate + NADH + H(+). It functions in the pathway amino-acid metabolism. Its pathway is siderophore biosynthesis. NAD(H)-dependent dehydrogenase/reductase with a preference for cyclic substrates. Catalyzes stereoselective conversion of 4-oxo-L-proline to cis-4-hydroxy-L-proline, likely a detoxification mechanism for ketoprolines. Mediates the formation of 2,5-dihydroxybenzoate (2,5-DHBA), a siderophore that chelates free cytoplasmic iron and associates with LCN2, thereby regulating iron transport and homeostasis while protecting cells against free radical-induced oxidative stress. The iron-siderophore complex is imported into mitochondria, providing an iron source for mitochondrial metabolic processes in particular heme synthesis. May act as a 3-hydroxybutyrate dehydrogenase. This Bos taurus (Bovine) protein is Dehydrogenase/reductase SDR family member 6 (BDH2).